Here is a 310-residue protein sequence, read N- to C-terminus: RING-H2 finger protein ATL60 (310 aa).

The chain crosses the membrane as a helical span at residues 24–44 (VLLFSIVSIFTGILFLLLLHL). The RING-type; atypical zinc finger occupies 120-162 (CAVCLSDLVDGDKARVLPRCNHGFHVDCIDMWFQSHSTCPLCR). Disordered stretches follow at residues 170–201 (DTTH…QDQS) and 240–260 (GNFA…RSQE). Polar residues predominate over residues 179–201 (LPQNQNFESGHSTNQHNPSQDQS).

Belongs to the RING-type zinc finger family. ATL subfamily.

It is found in the membrane. It catalyses the reaction S-ubiquitinyl-[E2 ubiquitin-conjugating enzyme]-L-cysteine + [acceptor protein]-L-lysine = [E2 ubiquitin-conjugating enzyme]-L-cysteine + N(6)-ubiquitinyl-[acceptor protein]-L-lysine.. Its pathway is protein modification; protein ubiquitination. The polypeptide is RING-H2 finger protein ATL60 (ATL60) (Arabidopsis thaliana (Mouse-ear cress)).